Consider the following 109-residue polypeptide: Cell cycle protein GpsB (109 aa).

Residues 36-63 are a coiled coil; sequence IKDYETYAALVKSLRQEIADLKEELTRK.

It belongs to the GpsB family. Forms polymers through the coiled coil domains. Interacts with PBP1, MreC and EzrA.

It localises to the cytoplasm. In terms of biological role, divisome component that associates with the complex late in its assembly, after the Z-ring is formed, and is dependent on DivIC and PBP2B for its recruitment to the divisome. Together with EzrA, is a key component of the system that regulates PBP1 localization during cell cycle progression. Its main role could be the removal of PBP1 from the cell pole after pole maturation is completed. Also contributes to the recruitment of PBP1 to the division complex. Not essential for septum formation. The polypeptide is Cell cycle protein GpsB (Streptococcus pneumoniae serotype 4 (strain ATCC BAA-334 / TIGR4)).